The sequence spans 283 residues: Cyclin-C (283 aa).

A Cyclin N-terminal domain is found at 46–144; it reads NVIQALGEHL…ILECEFYLLE (99 aa). The interval 252–283 is disordered; the sequence is TILSKMPKPKPPPNSEGEQGPNGSQNSSYSQS. Over residues 272–283 the composition is skewed to polar residues; that stretch reads PNGSQNSSYSQS.

This sequence belongs to the cyclin family. Cyclin C subfamily. As to quaternary structure, component of the Mediator complex. The cylin/CDK pair formed by CCNC/CDK8 also associates with the large subunit of RNA polymerase II.

The protein resides in the nucleus. Component of the Mediator complex, a coactivator involved in regulated gene transcription of nearly all RNA polymerase II-dependent genes. Mediator functions as a bridge to convey information from gene-specific regulatory proteins to the basal RNA polymerase II transcription machinery. Mediator is recruited to promoters by direct interactions with regulatory proteins and serves as a scaffold for the assembly of a functional preinitiation complex with RNA polymerase II and the general transcription factors. Binds to and activates cyclin-dependent kinase CDK8 that phosphorylates the CTD (C-terminal domain) of the large subunit of RNA polymerase II (RNAp II), which may inhibit the formation of a transcription initiation complex. The protein is Cyclin-C (CCNC) of Gallus gallus (Chicken).